Consider the following 935-residue polypeptide: Isoleucine--tRNA ligase (935 aa).

The 'HIGH' region motif lies at 58–68 (PYANGSIHVGH). Glu558 lines the L-isoleucyl-5'-AMP pocket. Positions 599–603 (KMSKS) match the 'KMSKS' region motif. Residue Lys602 participates in ATP binding. 4 residues coordinate Zn(2+): Cys897, Cys900, Cys917, and Cys920.

This sequence belongs to the class-I aminoacyl-tRNA synthetase family. IleS type 1 subfamily. In terms of assembly, monomer. Requires Zn(2+) as cofactor.

Its subcellular location is the cytoplasm. It carries out the reaction tRNA(Ile) + L-isoleucine + ATP = L-isoleucyl-tRNA(Ile) + AMP + diphosphate. In terms of biological role, catalyzes the attachment of isoleucine to tRNA(Ile). As IleRS can inadvertently accommodate and process structurally similar amino acids such as valine, to avoid such errors it has two additional distinct tRNA(Ile)-dependent editing activities. One activity is designated as 'pretransfer' editing and involves the hydrolysis of activated Val-AMP. The other activity is designated 'posttransfer' editing and involves deacylation of mischarged Val-tRNA(Ile). The protein is Isoleucine--tRNA ligase of Francisella tularensis subsp. novicida (strain U112).